We begin with the raw amino-acid sequence, 750 residues long: Ribosomal RNA large subunit methyltransferase K/L (750 aa).

A THUMP domain is found at 46–157 (TAYRLCLWSR…RGEAILSLDL (112 aa)).

This sequence belongs to the methyltransferase superfamily. RlmKL family.

It is found in the cytoplasm. The catalysed reaction is guanosine(2445) in 23S rRNA + S-adenosyl-L-methionine = N(2)-methylguanosine(2445) in 23S rRNA + S-adenosyl-L-homocysteine + H(+). The enzyme catalyses guanosine(2069) in 23S rRNA + S-adenosyl-L-methionine = N(2)-methylguanosine(2069) in 23S rRNA + S-adenosyl-L-homocysteine + H(+). Specifically methylates the guanine in position 2445 (m2G2445) and the guanine in position 2069 (m7G2069) of 23S rRNA. In Pseudomonas savastanoi pv. phaseolicola (strain 1448A / Race 6) (Pseudomonas syringae pv. phaseolicola (strain 1448A / Race 6)), this protein is Ribosomal RNA large subunit methyltransferase K/L.